The following is a 136-amino-acid chain: Large ribosomal subunit protein bL21 (136 aa).

A compositionally biased stretch (low complexity) spans 1–21 (MSETPSKAKASKPAESKAQAS). The tract at residues 1–25 (MSETPSKAKASKPAESKAQASDSSG) is disordered.

The protein belongs to the bacterial ribosomal protein bL21 family. In terms of assembly, part of the 50S ribosomal subunit. Contacts protein L20.

Its function is as follows. This protein binds to 23S rRNA in the presence of protein L20. The polypeptide is Large ribosomal subunit protein bL21 (Synechococcus sp. (strain RCC307)).